A 311-amino-acid polypeptide reads, in one-letter code: Probable dihydroorotate dehydrogenase A (fumarate) (311 aa).

Residues lysine 45, 69–73 (NSMGL), and asparagine 128 contribute to the substrate site. 45–46 (KT) is a binding site for FMN. FMN is bound at residue asparagine 128. Cysteine 131 (nucleophile) is an active-site residue. FMN contacts are provided by lysine 165 and valine 193. 194–195 (NS) lines the substrate pocket. FMN is bound by residues glycine 220, 248-249 (GG), and 270-271 (GT).

This sequence belongs to the dihydroorotate dehydrogenase family. Type 1 subfamily. In terms of assembly, homodimer. It depends on FMN as a cofactor.

It localises to the cytoplasm. It carries out the reaction (S)-dihydroorotate + fumarate = orotate + succinate. Its pathway is pyrimidine metabolism; UMP biosynthesis via de novo pathway. Its function is as follows. Catalyzes the conversion of dihydroorotate to orotate with fumarate as the electron acceptor. This is Probable dihydroorotate dehydrogenase A (fumarate) (pyrDA) from Streptococcus pneumoniae serotype 4 (strain ATCC BAA-334 / TIGR4).